A 296-amino-acid polypeptide reads, in one-letter code: MAMVQGKSLKYRVWATHIAMWAFLALIIFPLLMIIAISFREGNFATGSLIPDNPTLDHWKLALGFSITNADGTVTPPPFPVMTWLWNSVKVGGISAILIVALSTTSAYAFARMKFKGKNTILKAMMIFQMFPAVLALVALYALFDKLGQYIPFLGLNTHGGLIFAYLGGIALHVWTIKGYFESIDSSLEEAAALDGATPWQAFRLVLLPLSVPILAVVFILSFIMVIGEVPVASLLLSDVDSYTLAVGMQQYLYPQNYLWGDFAAAAVLSAVPITAVFLLAQRWLVGGLTAGGVKG.

Residues 1-12 (MAMVQGKSLKYR) are Cytoplasmic-facing. Residues 13–35 (VWATHIAMWAFLALIIFPLLMII) form a helical membrane-spanning segment. At 36-88 (AISFREGNFATGSLIPDNPTLDHWKLALGFSITNADGTVTPPPFPVMTWLWNS) the chain is on the periplasmic side. Residues 85-281 (LWNSVKVGGI…VPITAVFLLA (197 aa)) form the ABC transmembrane type-1 domain. Residues 89 to 111 (VKVGGISAILIVALSTTSAYAFA) traverse the membrane as a helical segment. Residues 112–123 (RMKFKGKNTILK) are Cytoplasmic-facing. Residues 124–143 (AMMIFQMFPAVLALVALYAL) traverse the membrane as a helical segment. Topologically, residues 144-152 (FDKLGQYIP) are periplasmic. The chain crosses the membrane as a helical span at residues 153-175 (FLGLNTHGGLIFAYLGGIALHVW). Residues 176–204 (TIKGYFESIDSSLEEAAALDGATPWQAFR) are Cytoplasmic-facing. Residues 205 to 227 (LVLLPLSVPILAVVFILSFIMVI) traverse the membrane as a helical segment. At 228–257 (GEVPVASLLLSDVDSYTLAVGMQQYLYPQN) the chain is on the periplasmic side. A helical membrane pass occupies residues 258-280 (YLWGDFAAAAVLSAVPITAVFLL). Topologically, residues 281–296 (AQRWLVGGLTAGGVKG) are cytoplasmic.

Belongs to the binding-protein-dependent transport system permease family. MalFG subfamily. In terms of assembly, the complex is composed of two ATP-binding proteins (MalK), two transmembrane proteins (MalG and MalF) and a solute-binding protein (MalE).

It localises to the cell inner membrane. In terms of biological role, part of the ABC transporter complex MalEFGK involved in maltose/maltodextrin import. Probably responsible for the translocation of the substrate across the membrane. The polypeptide is Maltose/maltodextrin transport system permease protein MalG (malG) (Vibrio parahaemolyticus serotype O3:K6 (strain RIMD 2210633)).